The chain runs to 172 residues: Peptide deformylase (172 aa).

The Fe cation site is built by cysteine 92 and histidine 134. Glutamate 135 is an active-site residue. Fe cation is bound at residue histidine 138.

This sequence belongs to the polypeptide deformylase family. Fe(2+) is required as a cofactor.

The enzyme catalyses N-terminal N-formyl-L-methionyl-[peptide] + H2O = N-terminal L-methionyl-[peptide] + formate. Removes the formyl group from the N-terminal Met of newly synthesized proteins. Requires at least a dipeptide for an efficient rate of reaction. N-terminal L-methionine is a prerequisite for activity but the enzyme has broad specificity at other positions. This Saccharophagus degradans (strain 2-40 / ATCC 43961 / DSM 17024) protein is Peptide deformylase.